The chain runs to 370 residues: 4-hydroxy-3-methylbut-2-en-1-yl diphosphate synthase (flavodoxin) (370 aa).

Positions 270, 273, 305, and 312 each coordinate [4Fe-4S] cluster.

This sequence belongs to the IspG family. [4Fe-4S] cluster serves as cofactor.

The catalysed reaction is (2E)-4-hydroxy-3-methylbut-2-enyl diphosphate + oxidized [flavodoxin] + H2O + 2 H(+) = 2-C-methyl-D-erythritol 2,4-cyclic diphosphate + reduced [flavodoxin]. It participates in isoprenoid biosynthesis; isopentenyl diphosphate biosynthesis via DXP pathway; isopentenyl diphosphate from 1-deoxy-D-xylulose 5-phosphate: step 5/6. Functionally, converts 2C-methyl-D-erythritol 2,4-cyclodiphosphate (ME-2,4cPP) into 1-hydroxy-2-methyl-2-(E)-butenyl 4-diphosphate. This Azotobacter vinelandii (strain DJ / ATCC BAA-1303) protein is 4-hydroxy-3-methylbut-2-en-1-yl diphosphate synthase (flavodoxin).